The sequence spans 143 residues: Putative glycerol transporter Lin0368 (143 aa).

4 helical membrane passes run 6–26, 27–47, 60–80, and 90–110; these read GMIGFCIAGMIVMSVWTPLAE, NYGIFGGYLAAFIIIGPMWFM, AAFVDMAVGIGICGIMRDVFM, and LPTIGLVAIGAVLAGIVAAAI. Residues 118–143 are disordered; the sequence is HEAKQEKTEPGMNIKEEERLNENQLV.

It localises to the membrane. In terms of biological role, could be involved in the glycerol uptake either via facilitated diffusion or active transport. The protein is Putative glycerol transporter Lin0368 of Listeria innocua serovar 6a (strain ATCC BAA-680 / CLIP 11262).